The chain runs to 548 residues: Beta-lactamase-like protein 2 (548 aa).

The signal sequence occupies residues 1 to 24; that stretch reads MKIMNKQSITIFLIICFLINLILS. N-linked (GlcNAc...) asparagine glycans are attached at residues Asn-237, Asn-258, Asn-443, and Asn-459.

Belongs to the beta-lactamase family.

The protein resides in the secreted. In Dictyostelium discoideum (Social amoeba), this protein is Beta-lactamase-like protein 2.